Here is a 71-residue protein sequence, read N- to C-terminus: Large ribosomal subunit protein bL31 (71 aa).

This sequence belongs to the bacterial ribosomal protein bL31 family. Type A subfamily. Part of the 50S ribosomal subunit.

Its function is as follows. Binds the 23S rRNA. This chain is Large ribosomal subunit protein bL31, found in Metamycoplasma arthritidis (strain 158L3-1) (Mycoplasma arthritidis).